Reading from the N-terminus, the 127-residue chain is Aspartate 1-decarboxylase (127 aa).

Residue serine 25 is the Schiff-base intermediate with substrate; via pyruvic acid of the active site. The residue at position 25 (serine 25) is a Pyruvic acid (Ser). A substrate-binding site is contributed by threonine 57. Tyrosine 58 functions as the Proton donor in the catalytic mechanism. Substrate is bound at residue 73–75 (GAA).

It belongs to the PanD family. Heterooctamer of four alpha and four beta subunits. It depends on pyruvate as a cofactor. Is synthesized initially as an inactive proenzyme, which is activated by self-cleavage at a specific serine bond to produce a beta-subunit with a hydroxyl group at its C-terminus and an alpha-subunit with a pyruvoyl group at its N-terminus.

Its subcellular location is the cytoplasm. It catalyses the reaction L-aspartate + H(+) = beta-alanine + CO2. Its pathway is cofactor biosynthesis; (R)-pantothenate biosynthesis; beta-alanine from L-aspartate: step 1/1. Catalyzes the pyruvoyl-dependent decarboxylation of aspartate to produce beta-alanine. In Clostridium botulinum (strain 657 / Type Ba4), this protein is Aspartate 1-decarboxylase.